The following is a 1499-amino-acid chain: Phospholipid-transporting ATPase VA (1499 aa).

The interval 1–53 (MEREPAGTEEPGPPGRRRRREGRTRTVRSNLLPPPGAEDPAAGAAKGERRRRR) is disordered. The Cytoplasmic portion of the chain corresponds to 1 to 86 (MEREPAGTEE…KNLFEQFHRP (86 aa)). Positions 15-26 (GRRRRREGRTRT) are enriched in basic residues. The chain crosses the membrane as a helical span at residues 87–106 (ANVYFVFIALLNFVPAVNAF). Over 107 to 110 (QPGL) the chain is Exoplasmic loop. A helical transmembrane segment spans residues 111-128 (ALAPVLFILAITAFRDLW). At 129–309 (EDYSRHRSDH…SKLERQMNCD (181 aa)) the chain is on the cytoplasmic side. A helical membrane pass occupies residues 310–332 (VLWCVLLLVCMSLFSAVGHGLWI). Residues 333–362 (WRYQEKKSLFYVPKSDGSSLSPVTAAVYSF) are Exoplasmic loop-facing. A helical transmembrane segment spans residues 363–384 (LTMIIVLQVLIPISLYVSIEIV). Topologically, residues 385–1087 (KACQVYFINQ…GHWCYSRLAN (703 aa)) are cytoplasmic. Catalysis depends on aspartate 427, which acts as the 4-aspartylphosphate intermediate. Positions 427, 428, and 429 each coordinate ATP. Aspartate 427 contacts Mg(2+). Threonine 429 serves as a coordination point for Mg(2+). The segment at 464–531 (ADSEEEEVVP…AFSSPMEKDI (68 aa)) is disordered. Serine 466 carries the post-translational modification Phosphoserine. A compositionally biased stretch (polar residues) spans 477-499 (SVSQRGSIGSHQSVRVVHRTQST). Residues glutamate 700, phenylalanine 742, lysine 766, arginine 809, threonine 889, glycine 890, aspartate 891, arginine 1005, and lysine 1011 each contribute to the ATP site. Mg(2+) is bound at residue aspartate 1031. ATP is bound by residues asparagine 1034 and aspartate 1035. Aspartate 1035 serves as a coordination point for Mg(2+). A helical transmembrane segment spans residues 1088–1108 (MVLYFFYKNTMFVGLLFWFQF). The Exoplasmic loop portion of the chain corresponds to 1109–1119 (FCGFSASTMID). A helical membrane pass occupies residues 1120 to 1140 (QWYLIFFNLLFSSLPPLVTGV). Residues 1141–1170 (LDRDVPANVLLTNPQLYKSGQNMEEYRPRT) are Cytoplasmic-facing. A helical membrane pass occupies residues 1171 to 1192 (FWFNMADAAFQSLVCFSIPYLA). The Exoplasmic loop segment spans residues 1193-1199 (YYDSNVD). A helical transmembrane segment spans residues 1200–1222 (LFTWGTPIVTIALLTFLLHLGIE). Topologically, residues 1223-1228 (TKTWTW) are cytoplasmic. A helical transmembrane segment spans residues 1229–1249 (LNWITCGFSVLLFFTVALIYN). The Exoplasmic loop segment spans residues 1250–1267 (ASCATCYPPSNPYWTMQA). The chain crosses the membrane as a helical span at residues 1268–1292 (LLGDPVFYLTCLMTPVAALLPRLFF). Residues 1293–1499 (RSLQGRVFPT…LIGASSRRSQ (207 aa)) are Cytoplasmic-facing. Disordered regions lie at residues 1311 to 1356 (TRKS…PSWH) and 1464 to 1499 (DGQAGRGLPVQPHSGRSGLQGPDHRLLIGASSRRSQ). The span at 1330–1340 (LPKDSGTEHSS) shows a compositional bias: basic and acidic residues. The segment covering 1341 to 1356 (GRTVKTSVPLSQPSWH) has biased composition (polar residues).

This sequence belongs to the cation transport ATPase (P-type) (TC 3.A.3) family. Type IV subfamily. In terms of assembly, component of a P4-ATPase flippase complex which consists of a catalytic alpha subunit ATP10A and an accessory beta subunit TMEM30A. Mg(2+) serves as cofactor. Autophosphorylated at the conserved aspartate of the P-type ATPase signature sequence. Widely expressed, with highest levels in kidney, followed by lung, brain, prostate, testis, ovary and small intestine.

It localises to the cell membrane. The protein localises to the endoplasmic reticulum membrane. It carries out the reaction ATP + H2O + phospholipidSide 1 = ADP + phosphate + phospholipidSide 2.. It catalyses the reaction a 1,2-diacyl-sn-glycero-3-phosphocholine(out) + ATP + H2O = a 1,2-diacyl-sn-glycero-3-phosphocholine(in) + ADP + phosphate + H(+). The catalysed reaction is a beta-D-glucosyl-(1&lt;-&gt;1')-N-acylsphing-4-enine(out) + ATP + H2O = a beta-D-glucosyl-(1&lt;-&gt;1')-N-acylsphing-4-enine(in) + ADP + phosphate + H(+). Its activity is regulated as follows. Inhibited under hypotonic conditions. In terms of biological role, catalytic component of P4-ATPase flippase complex, which catalyzes the hydrolysis of ATP coupled to the transport of phosphatidylcholine (PC) from the outer to the inner leaflet of the plasma membrane. Initiates inward plasma membrane bending and recruitment of Bin/amphiphysin/Rvs (BAR) domain-containing proteins involved in membrane tubulation and cell trafficking. Facilitates ITGB1/beta1 integrin endocytosis, delaying cell adhesion and cell spreading on extracellular matrix. Has low flippase activity toward glucosylceramide (GlcCer). This Homo sapiens (Human) protein is Phospholipid-transporting ATPase VA.